A 358-amino-acid chain; its full sequence is Aminomethyltransferase (358 aa).

It belongs to the GcvT family. In terms of assembly, the glycine cleavage system is composed of four proteins: P, T, L and H.

It catalyses the reaction N(6)-[(R)-S(8)-aminomethyldihydrolipoyl]-L-lysyl-[protein] + (6S)-5,6,7,8-tetrahydrofolate = N(6)-[(R)-dihydrolipoyl]-L-lysyl-[protein] + (6R)-5,10-methylene-5,6,7,8-tetrahydrofolate + NH4(+). Its function is as follows. The glycine cleavage system catalyzes the degradation of glycine. This is Aminomethyltransferase from Francisella philomiragia subsp. philomiragia (strain ATCC 25017 / CCUG 19701 / FSC 153 / O#319-036).